The primary structure comprises 334 residues: Ketol-acid reductoisomerase (NADP(+)) (334 aa).

Residues 3–183 form the KARI N-terminal Rossmann domain; it reads ATIYYENDAD…GGTRGGVIET (181 aa). NADP(+)-binding positions include 26 to 29, Arg49, Ser52, and 84 to 87; these read YGSQ and DEVQ. The active site involves His109. Gly135 is an NADP(+) binding site. In terms of domain architecture, KARI C-terminal knotted spans 184-329; it reads TFAEETETDL…LGLRRMMNWI (146 aa). Positions 192, 196, 228, and 232 each coordinate Mg(2+). Position 253 (Ser253) interacts with substrate.

It belongs to the ketol-acid reductoisomerase family. Requires Mg(2+) as cofactor.

The enzyme catalyses (2R)-2,3-dihydroxy-3-methylbutanoate + NADP(+) = (2S)-2-acetolactate + NADPH + H(+). It carries out the reaction (2R,3R)-2,3-dihydroxy-3-methylpentanoate + NADP(+) = (S)-2-ethyl-2-hydroxy-3-oxobutanoate + NADPH + H(+). Its pathway is amino-acid biosynthesis; L-isoleucine biosynthesis; L-isoleucine from 2-oxobutanoate: step 2/4. It participates in amino-acid biosynthesis; L-valine biosynthesis; L-valine from pyruvate: step 2/4. Its function is as follows. Involved in the biosynthesis of branched-chain amino acids (BCAA). Catalyzes an alkyl-migration followed by a ketol-acid reduction of (S)-2-acetolactate (S2AL) to yield (R)-2,3-dihydroxy-isovalerate. In the isomerase reaction, S2AL is rearranged via a Mg-dependent methyl migration to produce 3-hydroxy-3-methyl-2-ketobutyrate (HMKB). In the reductase reaction, this 2-ketoacid undergoes a metal-dependent reduction by NADPH to yield (R)-2,3-dihydroxy-isovalerate. The protein is Ketol-acid reductoisomerase (NADP(+)) of Rhodopirellula baltica (strain DSM 10527 / NCIMB 13988 / SH1).